The following is a 215-amino-acid chain: Adenylate kinase (215 aa).

10-15 contributes to the ATP binding site; that stretch reads GAGKGT. The NMP stretch occupies residues 30–59; that stretch reads STGDMLRAAVKAGTELGLIAKSVMDSGGLV. AMP contacts are provided by residues Thr-31, Arg-36, 57–59, 85–88, and Gln-92; these read GLV and GFPR. An LID region spans residues 122–159; that stretch reads GRRVHEASGRVYHTVYNPPKVEGKDDVTGDDLVQRKDD. ATP-binding positions include Arg-123 and 132-133; that span reads VY. AMP contacts are provided by Arg-156 and Arg-167. An ATP-binding site is contributed by Gly-201.

Belongs to the adenylate kinase family. In terms of assembly, monomer.

It localises to the cytoplasm. It catalyses the reaction AMP + ATP = 2 ADP. It functions in the pathway purine metabolism; AMP biosynthesis via salvage pathway; AMP from ADP: step 1/1. Its function is as follows. Catalyzes the reversible transfer of the terminal phosphate group between ATP and AMP. Plays an important role in cellular energy homeostasis and in adenine nucleotide metabolism. This is Adenylate kinase from Pseudomonas fluorescens (strain SBW25).